We begin with the raw amino-acid sequence, 416 residues long: Dihydrolipoyllysine-residue succinyltransferase component of 2-oxoglutarate dehydrogenase complex (416 aa).

A Lipoyl-binding domain is found at 3–78 (IVDVKVPQLS…VADEIIAKID (76 aa)). K44 carries the N6-lipoyllysine modification. The 38-residue stretch at 115-152 (VAMPSAAKLMAEAGLSAGQVAGTGKDGRITKGDALAAA) folds into the Peripheral subunit-binding (PSBD) domain. Residues H387 and D391 contribute to the active site.

Belongs to the 2-oxoacid dehydrogenase family. In terms of assembly, forms a 24-polypeptide structural core with octahedral symmetry. Part of the 2-oxoglutarate dehydrogenase (OGDH) complex composed of E1 (2-oxoglutarate dehydrogenase), E2 (dihydrolipoamide succinyltransferase) and E3 (dihydrolipoamide dehydrogenase); the complex contains multiple copies of the three enzymatic components (E1, E2 and E3). The cofactor is (R)-lipoate.

It catalyses the reaction N(6)-[(R)-dihydrolipoyl]-L-lysyl-[protein] + succinyl-CoA = N(6)-[(R)-S(8)-succinyldihydrolipoyl]-L-lysyl-[protein] + CoA. Its pathway is amino-acid degradation; L-lysine degradation via saccharopine pathway; glutaryl-CoA from L-lysine: step 6/6. Its function is as follows. E2 component of the 2-oxoglutarate dehydrogenase (OGDH) complex which catalyzes the second step in the conversion of 2-oxoglutarate to succinyl-CoA and CO(2). The chain is Dihydrolipoyllysine-residue succinyltransferase component of 2-oxoglutarate dehydrogenase complex (sucB) from Cupriavidus necator (strain ATCC 17699 / DSM 428 / KCTC 22496 / NCIMB 10442 / H16 / Stanier 337) (Ralstonia eutropha).